A 129-amino-acid chain; its full sequence is GM1b/asialo-GM1 oligosaccharide-binding R-type lectin (129 aa).

A carbohydrate-binding positions include 21 to 23, 26 to 28, phenylalanine 32, and 37 to 40; these read FYN, RKD, and YDDQ.

In terms of assembly, homodimer. Highest expression in the outer part of the mantle rim. Highly expressed in gills, with a much lower expression in the digestive gland and posterior adductor muscle. Scarcely detectable in foot.

Its activity is regulated as follows. Hemagglutination activity requires divalent cations such as Ca(2+). Hemagglutination activity is weakly inhibited by monosaccharides such as D-Gal (25 mM), D-GalNAc (25 mM) and D-Fuc (25 mM) and by disaccharides such as melibiose (25 mM) and lactose (25 mM). Hemagglutination activity is inhibited by bovine submaxillary mucin, but not by porcine stomach mucin or fetuin. Galbeta1-3GalNAcbeta1-4Galbeta1-4Glc oligosaccharide-binding lectin. Binds strongly to the oligosaccharides of ganglioside GM1b and to a lesser extent its precursor asialo-GM1. Binds weakly to asialo-GM2 oligosaccharide and to the glycan moiety of globo-series stage-specific embryonal antigen 4 (SSEA-4) hexaose. Binds galactose, N-acetylgalactose and lactose. Does not bind GM1. Does not bind to Gal-beta1,3-GalNAc (Thomsen-Friedenreich antigen), the oligosaccharide of GM1a ganglioside or SSEA-4 tetraose. Does not bind to N-glycans, O-glycans or glycosaminoglycans of glycoproteins. Does not bind Lewis glycans, derivatives of lactose or N-acetyllactosamine or blood group (ABH-type) oligosaccharides. Does not bind glucose. Has hemagglutination activity towards rabbit erythrocytes. Displays cytotoxic effects against various cultured cell lines including human breast (MCF-7), cervical (HeLa) and colon cancer (Caco2) cell lines, as well as dog kidney (MDCK) cell line that express asialo-GM1 oligosaccharide at their cell surface. Shows dose- and time-dependent activation of MKK3/6, ERK1/2 and p38 MAPK, as well as caspase-3/9 in HeLa cervical cancer cells. No cytotoxic effect on BT474 human breast cancer cell line. May be involved in recognition of glycans found on parasitic or symbiotic microorganisms. This is GM1b/asialo-GM1 oligosaccharide-binding R-type lectin from Mytilisepta virgata (Purplish bifurcate mussel).